Here is a 238-residue protein sequence, read N- to C-terminus: Single-stranded DNA-binding protein WHY2, mitochondrial (238 aa).

The transit peptide at 1–29 (MMKQARSLLSRSLCDQSKSLFEASTLRGF) directs the protein to the mitochondrion. A required for ssDNA binding region spans residues 62–67 (KGKAAL).

It belongs to the Whirly family. Homotetramer.

The protein localises to the mitochondrion. In terms of biological role, single-stranded DNA-binding protein that associates with mitochondrial DNA and may play a role in the regulation of the gene expression machinery. Also seems to be required to prevent break-induced DNA rearrangements in the mitochondrial genome. Can bind to melt double-stranded DNA in vivo. The sequence is that of Single-stranded DNA-binding protein WHY2, mitochondrial (WHY2) from Arabidopsis thaliana (Mouse-ear cress).